The following is an 85-amino-acid chain: Antifungal protein (85 aa).

The N-terminal stretch at 1 to 18 (MVKLFVIVILALIAVAFG) is a signal peptide. Repeat copies occupy residues 19–25 (QHGHGGQ) and 67–73 (QHGHGGQ). The interval 19 to 73 (QHGHGGQDQHGYGHGQQAVYGKGHEGHGVNNLGQDGHGQHGYAHGHSDQHGHGGQ) is 2 X 7 AA repeats of Q-H-G-H-G-G-Q. The span at 22-32 (HGGQDQHGYGH) shows a compositional bias: gly residues. The tract at residues 22 to 85 (HGGQDQHGYG…QHDGYKNRGY (64 aa)) is disordered. Residues 63–85 (GHSDQHGHGGQHGQHDGYKNRGY) are compositionally biased toward basic and acidic residues.

Homodimer. Post-translationally, the N-terminus is blocked. As to expression, hemolymph.

This protein inhibits the growth of a variety of fungal species. The antifungal activity of this protein is enhanced by the presence of sarcotoxin IA. This chain is Antifungal protein, found in Sarcophaga peregrina (Flesh fly).